The chain runs to 344 residues: N-acetyl-gamma-glutamyl-phosphate reductase (344 aa).

The active site involves Cys-150.

This sequence belongs to the NAGSA dehydrogenase family. Type 1 subfamily.

It is found in the cytoplasm. It carries out the reaction N-acetyl-L-glutamate 5-semialdehyde + phosphate + NADP(+) = N-acetyl-L-glutamyl 5-phosphate + NADPH + H(+). The protein operates within amino-acid biosynthesis; L-arginine biosynthesis; N(2)-acetyl-L-ornithine from L-glutamate: step 3/4. In terms of biological role, catalyzes the NADPH-dependent reduction of N-acetyl-5-glutamyl phosphate to yield N-acetyl-L-glutamate 5-semialdehyde. The protein is N-acetyl-gamma-glutamyl-phosphate reductase of Pseudomonas entomophila (strain L48).